The chain runs to 1076 residues: Guanylyl cyclase C (1076 aa).

The first 23 residues, 1 to 23, serve as a signal peptide directing secretion; that stretch reads MKSPLLGLVVWSLLLQLLQPGLA. At 24–433 the chain is on the extracellular side; the sequence is FWNSQISQNC…PHDIPGLGPH (410 aa). Residues Asn35, Asn82, Asn191, Asn198, Asn287, Asn306, Asn310, Asn348, and Asn405 are each glycosylated (N-linked (GlcNAc...) asparagine). The helical transmembrane segment at 434–457 threads the bilayer; it reads ILLIAVCTLAGVVVLILLIALLVL. Residues 458–1076 lie on the Cytoplasmic side of the membrane; that stretch reads RKYKKDNELR…NTTDQDSTYF (619 aa). The region spanning 492–752 is the Protein kinase domain; it reads LKIDDDKKRD…KIENTLAKIF (261 aa). One can recognise a Guanylate cyclase domain in the interval 827-957; sequence TVYFSDIVGF…DTVNTASRME (131 aa).

This sequence belongs to the adenylyl cyclase class-4/guanylyl cyclase family. In terms of assembly, homotrimer. Interacts via its C-terminal region with NHERF4. Interacts with the lectin chaperone VIP36. Glycosylation at Asn-62 is required for interaction with VIP36 while glycosylation at Asn-348 and Asn-405 modulates ligand-mediated GC-C activation.

It is found in the cell membrane. The protein resides in the endoplasmic reticulum membrane. The enzyme catalyses GTP = 3',5'-cyclic GMP + diphosphate. Its function is as follows. Guanylyl cyclase that catalyzes synthesis of cyclic GMP (cGMP) from GTP. This is Guanylyl cyclase C (GUCY2C) from Cavia porcellus (Guinea pig).